Reading from the N-terminus, the 738-residue chain is Wall-associated receptor kinase 4 (738 aa).

The signal sequence occupies residues 1 to 22 (MKVQRLFLVAIFCLSYMQLVKG). Over 23–335 (QTLPRCPEKC…PKGNPEYVEW (313 aa)) the chain is Extracellular. Asparagine 34, asparagine 56, asparagine 109, asparagine 115, asparagine 132, asparagine 182, and asparagine 208 each carry an N-linked (GlcNAc...) asparagine glycan. The 47-residue stretch at 232–278 (RGETCGQVGEKKCGVNGICSNSASGIGYTCKCKGGFQGNPYLQNGCQ) folds into the EGF-like 1 domain. Disulfide bonds link cysteine 236–cysteine 250, cysteine 244–cysteine 261, cysteine 263–cysteine 277, cysteine 283–cysteine 300, cysteine 294–cysteine 309, and cysteine 311–cysteine 324. Residues 279–325 (DINECTTANPIHKHNCSGDSTCENKLGHFRCNCRSRYELNTTTNTCK) form the EGF-like 2; calcium-binding domain. A glycan (N-linked (GlcNAc...) asparagine) is linked at asparagine 293. The N-linked (GlcNAc...) asparagine glycan is linked to asparagine 318. Residues 336-356 (TTIVLGTTIGFLVILLAISCI) traverse the membrane as a helical segment. At 357 to 738 (EHKMKNTKDT…VAILDIEAGR (382 aa)) the chain is on the cytoplasmic side. Threonine 399 is subject to Phosphothreonine. The Protein kinase domain occupies 410 to 693 (YDENRILGQG…RVTKTKHKWS (284 aa)). ATP is bound by residues 416–424 (LGQGGQGTV) and lysine 438. At tyrosine 483 the chain carries Phosphotyrosine. Aspartate 535 serves as the catalytic Proton acceptor. 2 positions are modified to phosphothreonine: threonine 569 and threonine 574. Tyrosine 582 carries the phosphotyrosine modification.

It belongs to the protein kinase superfamily. Ser/Thr protein kinase family. Strictly expressed in siliques.

It is found in the membrane. The enzyme catalyses L-seryl-[protein] + ATP = O-phospho-L-seryl-[protein] + ADP + H(+). It catalyses the reaction L-threonyl-[protein] + ATP = O-phospho-L-threonyl-[protein] + ADP + H(+). Its function is as follows. Serine/threonine-protein kinase that may function as a signaling receptor of extracellular matrix component. Binding to pectin may have significance in the control of cell expansion, morphogenesis and development. This chain is Wall-associated receptor kinase 4 (WAK4), found in Arabidopsis thaliana (Mouse-ear cress).